We begin with the raw amino-acid sequence, 276 residues long: Shikimate dehydrogenase (NADP(+)) (276 aa).

Shikimate is bound by residues 20–22 (SRS) and Thr67. Lys71 serves as the catalytic Proton acceptor. Asp83 is an NADP(+) binding site. 2 residues coordinate shikimate: Asn92 and Asp107. NADP(+)-binding positions include 131 to 135 (GAGGA) and Ile217. Position 219 (Tyr219) interacts with shikimate. NADP(+) is bound at residue Gly240.

The protein belongs to the shikimate dehydrogenase family. As to quaternary structure, homodimer.

The catalysed reaction is shikimate + NADP(+) = 3-dehydroshikimate + NADPH + H(+). It participates in metabolic intermediate biosynthesis; chorismate biosynthesis; chorismate from D-erythrose 4-phosphate and phosphoenolpyruvate: step 4/7. In terms of biological role, involved in the biosynthesis of the chorismate, which leads to the biosynthesis of aromatic amino acids. Catalyzes the reversible NADPH linked reduction of 3-dehydroshikimate (DHSA) to yield shikimate (SA). This chain is Shikimate dehydrogenase (NADP(+)), found in Acidiphilium cryptum (strain JF-5).